A 290-amino-acid polypeptide reads, in one-letter code: Poly-beta-1,6-N-acetyl-D-glucosamine N-deacetylase (290 aa).

The N-terminal stretch at 1-28 is a signal peptide; the sequence is MKYRKFIILVLSILIILPVSTLDGHHIA. Residues 114 to 290 enclose the NodB homology domain; that stretch reads RSVWINFDDM…KRWDGFHEKD (177 aa).

The protein belongs to the polysaccharide deacetylase family.

The protein localises to the secreted. The protein resides in the cell wall. Catalyzes the N-deacetylation of poly-beta-1,6-N-acetyl-D-glucosamine (PNAG, also referred to as PIA), a biofilm adhesin polysaccharide. N-deacetylation is crucial for attachment of the polysaccharide to the bacterial cell surface; it leads to the introduction of positive charges in the otherwise neutral PIA polymer, allowing electrostatic interactions. This chain is Poly-beta-1,6-N-acetyl-D-glucosamine N-deacetylase (icaB), found in Staphylococcus aureus (strain NCTC 8325 / PS 47).